Consider the following 113-residue polypeptide: Ribonuclease P protein component (113 aa).

The protein belongs to the RnpA family. Consists of a catalytic RNA component (M1 or rnpB) and a protein subunit.

It catalyses the reaction Endonucleolytic cleavage of RNA, removing 5'-extranucleotides from tRNA precursor.. Its function is as follows. RNaseP catalyzes the removal of the 5'-leader sequence from pre-tRNA to produce the mature 5'-terminus. It can also cleave other RNA substrates such as 4.5S RNA. The protein component plays an auxiliary but essential role in vivo by binding to the 5'-leader sequence and broadening the substrate specificity of the ribozyme. The chain is Ribonuclease P protein component from Ligilactobacillus salivarius (strain UCC118) (Lactobacillus salivarius).